We begin with the raw amino-acid sequence, 249 residues long: Ribonuclease 3 (249 aa).

One can recognise an RNase III domain in the interval 29–151 (SSDIEVIKKN…LIGALYECLR (123 aa)). Glu-65 serves as a coordination point for Mg(2+). Asp-69 is a catalytic residue. The Mg(2+) site is built by Glu-137 and Glu-140. Glu-140 is a catalytic residue. Residues 179 to 249 (NEKSALQEWS…AKEALKKLTN (71 aa)) enclose the DRBM domain. Residues 227 to 249 (GWGSSRKKAQKEAAKEALKKLTN) are disordered. Over residues 236–249 (QKEAAKEALKKLTN) the composition is skewed to basic and acidic residues.

Belongs to the ribonuclease III family. As to quaternary structure, homodimer. Mg(2+) is required as a cofactor.

It localises to the cytoplasm. It catalyses the reaction Endonucleolytic cleavage to 5'-phosphomonoester.. Its function is as follows. Digests double-stranded RNA. Involved in the processing of primary rRNA transcript to yield the immediate precursors to the large and small rRNAs (23S and 16S). Processes some mRNAs, and tRNAs when they are encoded in the rRNA operon. Processes pre-crRNA and tracrRNA of type II CRISPR loci if present in the organism. The sequence is that of Ribonuclease 3 from Prochlorococcus marinus (strain SARG / CCMP1375 / SS120).